We begin with the raw amino-acid sequence, 351 residues long: Phospho-N-acetylmuramoyl-pentapeptide-transferase (351 aa).

A run of 10 helical transmembrane segments spans residues 17 to 37 (TAYA…FIIL), 63 to 83 (IPTM…FFWI), 85 to 105 (FWNI…CLGF), 124 to 144 (FKIY…YYFG), 158 to 178 (SLKL…LISA), 190 to 210 (GLAI…AYLA), 230 to 250 (LVVF…FNAY), 254 to 274 (IMMG…TALI), 279 to 299 (ILFA…IIQV), and 328 to 348 (QVVI…LSTL).

It belongs to the glycosyltransferase 4 family. MraY subfamily. Mg(2+) serves as cofactor.

It localises to the cell inner membrane. The catalysed reaction is UDP-N-acetyl-alpha-D-muramoyl-L-alanyl-gamma-D-glutamyl-meso-2,6-diaminopimeloyl-D-alanyl-D-alanine + di-trans,octa-cis-undecaprenyl phosphate = di-trans,octa-cis-undecaprenyl diphospho-N-acetyl-alpha-D-muramoyl-L-alanyl-D-glutamyl-meso-2,6-diaminopimeloyl-D-alanyl-D-alanine + UMP. Its pathway is cell wall biogenesis; peptidoglycan biosynthesis. Functionally, catalyzes the initial step of the lipid cycle reactions in the biosynthesis of the cell wall peptidoglycan: transfers peptidoglycan precursor phospho-MurNAc-pentapeptide from UDP-MurNAc-pentapeptide onto the lipid carrier undecaprenyl phosphate, yielding undecaprenyl-pyrophosphoryl-MurNAc-pentapeptide, known as lipid I. The chain is Phospho-N-acetylmuramoyl-pentapeptide-transferase from Borrelia turicatae (strain 91E135).